The chain runs to 349 residues: Microbial Terpene synthase-like protein 1 (349 aa).

The Mg(2+) site is built by D98, D102, N243, and S247. The DDXXD motif signature appears at 98–102 (DDILD).

This sequence belongs to the terpene synthase family. Requires Mg(2+) as cofactor.

The protein operates within secondary metabolite biosynthesis; terpenoid biosynthesis. Its function is as follows. Sesquiterpene synthase converting farnesyl diphosphate to six sesquiterpenes, with beta-elemene, delta-cadinene and an unidentified oxygenated sesquiterpene as the major products. Has no diterpene synthase activity. The protein is Microbial Terpene synthase-like protein 1 of Selaginella moellendorffii (Spikemoss).